Reading from the N-terminus, the 183-residue chain is Pyruvoyl-dependent arginine decarboxylase 2 (183 aa).

Ser41 bears the Pyruvic acid (Ser) mark.

Belongs to the PdaD family. The cofactor is pyruvate.

The enzyme catalyses L-arginine + H(+) = agmatine + CO2. In Methanosarcina mazei (strain ATCC BAA-159 / DSM 3647 / Goe1 / Go1 / JCM 11833 / OCM 88) (Methanosarcina frisia), this protein is Pyruvoyl-dependent arginine decarboxylase 2 (pdaD2).